The following is an 87-amino-acid chain: Kawaguchipeptin peptide (87 aa).

The propeptide occupies 1–33; it reads MKNPTLLPKLTAPVERPAVTSSDLKQASSVDAA. Residue W34 is the site of 3'-prenyl-2',N2-cyclotryptophan; partial attachment. Positions 34–44 form a cross-link, cyclopeptide (Trp-Pro); that stretch reads WLNGDNNWSTP. L35 bears the D-leucine; partial mark. Residue W41 is the site of 3'-prenyl-2',N2-cyclotryptophan; partial attachment. A propeptide spanning residues 45 to 51 is cleaved from the precursor; it reads FAGVNAA. W52 carries 3'-prenyl-2',N2-cyclotryptophan; partial lipidation. Residues 52–62 constitute a cross-link (cyclopeptide (Trp-Pro)); it reads WLNGDNNWSTP. A D-leucine; partial modification is found at L53. W59 is lipidated: 3'-prenyl-2',N2-cyclotryptophan; partial. A propeptide spanning residues 63 to 69 is cleaved from the precursor; it reads FAGVNAA. The 3'-prenyl-2',N2-cyclotryptophan; partial moiety is linked to residue W70. The cyclopeptide (Trp-Pro) cross-link spans 70–80; sequence WLNGDNNWSTP. L71 is modified (D-leucine; partial). The 3'-prenyl-2',N2-cyclotryptophan; partial moiety is linked to residue W77. A propeptide spanning residues 81 to 87 is cleaved from the precursor; sequence FAADGAE.

Post-translationally, kawaguchipeptin A contains a D-Leu and 2 prenylated Trp, whereas kawaguchipeptin B only contains unmodified amino acids. Kawaguchipeptin A is prenylated in vivo. Upon expression in E.coli of the whole operon, Trp residues are prenylated by C-prenyltransferase KgpF. Prenylation by KgpF is likely the last enzymatic step in the biosynthetic maturation of kawaguchipeptin A.

Its function is as follows. Both kawaguchipeptin A and B, which only differ by post-translational modifications, have antibacterial activities, since they inhibit the growth of the Gram-positive bacterium S.aureus at a concentration of 1 ug/mL. The sequence is that of Kawaguchipeptin peptide from Microcystis aeruginosa (strain NIES-88 / KW-MA1-3).